The sequence spans 415 residues: Multidrug resistance protein MdtA (415 aa).

The N-terminal stretch at 1-21 is a signal peptide; it reads MKGSYKSRWVIVIVVVIAAIA. Positions 31–46 are enriched in polar residues; sequence DSQSAAPGATKQAQQS. Disordered regions lie at residues 31–56 and 391–415; these read DSQSAAPGATKQAQQSPAGGRRGMRA and VEAQSTTTPEEKATSREYAKKGARS. The span at 399–415 shows a compositional bias: basic and acidic residues; it reads PEEKATSREYAKKGARS.

The protein belongs to the membrane fusion protein (MFP) (TC 8.A.1) family. As to quaternary structure, part of a tripartite efflux system composed of MdtA, MdtB and MdtC.

It is found in the cell inner membrane. Its function is as follows. The MdtABC tripartite complex confers resistance against novobiocin and deoxycholate. This Escherichia coli O45:K1 (strain S88 / ExPEC) protein is Multidrug resistance protein MdtA.